The sequence spans 171 residues: MPAFFEGEFWQIANPELWVGVGLILFIAIVIWAKAPAMIAGKLDETAAKIQTDLDEAARIRAEAEALLATIRAEREETERQAIAMLAAAKADVAQMEIEAKAKLEDQIKRRAEMAERKIAQSEAQAQADVKAAAVDLAAQIAEQVLMARLAAGGSDGLVDTAIGQIGAKLQ.

The helical transmembrane segment at 19 to 39 threads the bilayer; the sequence is VGVGLILFIAIVIWAKAPAMI.

The protein belongs to the ATPase B chain family. F-type ATPases have 2 components, F(1) - the catalytic core - and F(0) - the membrane proton channel. F(1) has five subunits: alpha(3), beta(3), gamma(1), delta(1), epsilon(1). F(0) has three main subunits: a(1), b(2) and c(10-14). The alpha and beta chains form an alternating ring which encloses part of the gamma chain. F(1) is attached to F(0) by a central stalk formed by the gamma and epsilon chains, while a peripheral stalk is formed by the delta and b chains.

It localises to the cell inner membrane. F(1)F(0) ATP synthase produces ATP from ADP in the presence of a proton or sodium gradient. F-type ATPases consist of two structural domains, F(1) containing the extramembraneous catalytic core and F(0) containing the membrane proton channel, linked together by a central stalk and a peripheral stalk. During catalysis, ATP synthesis in the catalytic domain of F(1) is coupled via a rotary mechanism of the central stalk subunits to proton translocation. Its function is as follows. Component of the F(0) channel, it forms part of the peripheral stalk, linking F(1) to F(0). In Caulobacter sp. (strain K31), this protein is ATP synthase subunit b.